Here is a 440-residue protein sequence, read N- to C-terminus: Dihydrolipoyllysine-residue acetyltransferase component of pyruvate dehydrogenase complex (440 aa).

The 77-residue stretch at Ser2–Ala78 folds into the Lipoyl-binding domain. An N6-lipoyllysine modification is found at Lys43. Residues Ala91–Glu113 are disordered. Over residues Pro98 to Ala110 the composition is skewed to basic and acidic residues. The Peripheral subunit-binding (PSBD) domain maps to Lys149–Ile186. Over residues Ala192–Glu202 the composition is skewed to polar residues. The disordered stretch occupies residues Ala192–Asn214. The active site involves His412.

This sequence belongs to the 2-oxoacid dehydrogenase family. Forms a 24-polypeptide structural core with octahedral symmetry. (R)-lipoate is required as a cofactor.

The enzyme catalyses N(6)-[(R)-dihydrolipoyl]-L-lysyl-[protein] + acetyl-CoA = N(6)-[(R)-S(8)-acetyldihydrolipoyl]-L-lysyl-[protein] + CoA. Its function is as follows. The pyruvate dehydrogenase complex catalyzes the overall conversion of pyruvate to acetyl-CoA and CO(2). It contains multiple copies of three enzymatic components: pyruvate dehydrogenase (E1), dihydrolipoamide acetyltransferase (E2) and lipoamide dehydrogenase (E3). The polypeptide is Dihydrolipoyllysine-residue acetyltransferase component of pyruvate dehydrogenase complex (pdhC) (Zymomonas mobilis subsp. mobilis (strain ATCC 31821 / ZM4 / CP4)).